Here is a 145-residue protein sequence, read N- to C-terminus: UPF0201 protein Saci_1285 (145 aa).

It belongs to the UPF0201 family.

The chain is UPF0201 protein Saci_1285 from Sulfolobus acidocaldarius (strain ATCC 33909 / DSM 639 / JCM 8929 / NBRC 15157 / NCIMB 11770).